Here is a 161-residue protein sequence, read N- to C-terminus: Anaerobic nitrite reductase Hb2 (161 aa).

Positions 8–157 (GFSEEQEALV…LVDAIKSEMK (150 aa)) constitute a Globin domain. The Homodimerization motif lies at 41–45 (EIAPS). Residues Ser51, Lys65, His69, Lys99, Thr103, and His104 each coordinate heme b. The Homodimerization signature appears at 111-123 (NEHFEVTKFALLE).

This sequence belongs to the plant globin family. In terms of assembly, homodimer. It depends on heme b as a cofactor. Predominantly expressed in roots, cotyledons, stems and nodules (confined to some cells associated with the nitrogen-fixing Bradyrhizobium symbiont), and, to a lower extent, in flowers, young leaves, pods and seeds.

It localises to the cytoplasm. The protein resides in the nucleus. The catalysed reaction is Fe(III)-heme b-[protein] + nitric oxide + H2O = Fe(II)-heme b-[protein] + nitrite + 2 H(+). In terms of biological role, phytoglobin that reduces nitrite to nitric oxide (NO) under anoxic conditions (e.g. during flooding or in waterlogged soil) and upon root nodulation. Required for general plant development and during nodulation, especially for the onset of symbiosis. Monitors nitric oxide (NO) levels during early phase of the nitrogen-fixing symbiosis and buffers oxygen in functioning nodules. May not function as an oxygen storage or transport protein. Has an unusually high affinity for O(2) through a hexacoordinate heme iron because of a very low dissociation constant. Involved in water stress tolerance. The sequence is that of Anaerobic nitrite reductase Hb2 from Glycine max (Soybean).